A 559-amino-acid chain; its full sequence is Endoglin (559 aa).

Positions 1–20 (MKSICCVLVLCLLLCRRSTA) are cleaved as a signal peptide. Over 21 to 473 (SESICELKDV…SCFEFGLSAV (453 aa)) the chain is Extracellular. 2 cysteine pairs are disulfide-bonded: C25/C201 and C47/C174. 7 N-linked (GlcNAc...) asparagine glycosylation sites follow: N55, N79, N109, N133, N170, N302, and N352. C381 and C427 are joined by a disulfide. The chain crosses the membrane as a helical span at residues 474-494 (LGIAFGGFLIGVLLTGALWFI). The Cytoplasmic segment spans residues 495-559 (KIRTGHPVAL…TQSTPTSSMA (65 aa)). The segment at 528–559 (RQPVPTHPSPSENSSANASIGSTQSTPTSSMA) is disordered. The span at 536–546 (SPSENSSANAS) shows a compositional bias: low complexity. The segment covering 547 to 559 (IGSTQSTPTSSMA) has biased composition (polar residues).

In terms of assembly, homodimer; disulfide-linked.

The protein resides in the cell membrane. Functionally, vascular endothelium glycoprotein that plays an important role in the regulation of angiogenesis. Required for normal structure and integrity of adult vasculature. Important for endothelial cell shape changes in response to blood flow, which drive vascular remodeling and establishment of normal vascular morphology during angiogenesis. The polypeptide is Endoglin (Danio rerio (Zebrafish)).